A 564-amino-acid chain; its full sequence is Urease subunit alpha (564 aa).

One can recognise a Urease domain in the interval 126 to 564; sequence GGIDTHIHFI…LPMAQRYFLF (439 aa). Ni(2+) is bound by residues H131, H133, and K214. An N6-carboxylysine modification is found at K214. Residue H216 participates in substrate binding. Ni(2+)-binding residues include H243 and H269. H317 (proton donor) is an active-site residue. D357 contacts Ni(2+).

The protein belongs to the metallo-dependent hydrolases superfamily. Urease alpha subunit family. As to quaternary structure, heterotrimer of UreA (gamma), UreB (beta) and UreC (alpha) subunits. Three heterotrimers associate to form the active enzyme. Requires Ni cation as cofactor. Carboxylation allows a single lysine to coordinate two nickel ions.

It localises to the cytoplasm. It catalyses the reaction urea + 2 H2O + H(+) = hydrogencarbonate + 2 NH4(+). It participates in nitrogen metabolism; urea degradation; CO(2) and NH(3) from urea (urease route): step 1/1. This chain is Urease subunit alpha, found in Burkholderia pseudomallei (strain 1710b).